Here is a 242-residue protein sequence, read N- to C-terminus: MLQKTVGIVLHVLKYNDTSNIVEMYTELSGRASFLVTVPRSKKATVKSVLFQPLALIEFEADYRPNTSLFRIKEAKSFSPFTSIPYDPFKSAIALFLAEFLYRAIREEAENRPLFAYLQHSILWLDTCKISFANFHLVFLMRLSRFLGLYPNLDDYHAGDYFDMLNATFTSVRPQLHSSYIQPDEAGRLLQLMRMNYETMHLFGMNRTERARCLAIINEYYRLHLPDFPILKSLDVLKELFD.

Belongs to the RecO family.

Involved in DNA repair and RecF pathway recombination. The sequence is that of DNA repair protein RecO from Bacteroides fragilis (strain ATCC 25285 / DSM 2151 / CCUG 4856 / JCM 11019 / LMG 10263 / NCTC 9343 / Onslow / VPI 2553 / EN-2).